Consider the following 174-residue polypeptide: Peptide methionine sulfoxide reductase MsrA (174 aa).

C10 is an active-site residue.

This sequence belongs to the MsrA Met sulfoxide reductase family.

The catalysed reaction is L-methionyl-[protein] + [thioredoxin]-disulfide + H2O = L-methionyl-(S)-S-oxide-[protein] + [thioredoxin]-dithiol. It catalyses the reaction [thioredoxin]-disulfide + L-methionine + H2O = L-methionine (S)-S-oxide + [thioredoxin]-dithiol. Its function is as follows. Has an important function as a repair enzyme for proteins that have been inactivated by oxidation. Catalyzes the reversible oxidation-reduction of methionine sulfoxide in proteins to methionine. In Pseudarthrobacter chlorophenolicus (strain ATCC 700700 / DSM 12829 / CIP 107037 / JCM 12360 / KCTC 9906 / NCIMB 13794 / A6) (Arthrobacter chlorophenolicus), this protein is Peptide methionine sulfoxide reductase MsrA.